We begin with the raw amino-acid sequence, 33 residues long: Cytochrome b6-f complex subunit 8 (33 aa).

A helical membrane pass occupies residues 2 to 22 (LFTLGWASLAAMFSFSIAMVV).

Belongs to the PetN family. In terms of assembly, the 4 large subunits of the cytochrome b6-f complex are cytochrome b6, subunit IV (17 kDa polypeptide, PetD), cytochrome f and the Rieske protein, while the 4 small subunits are PetG, PetL, PetM and PetN. The complex functions as a dimer.

The protein resides in the cellular thylakoid membrane. In terms of biological role, component of the cytochrome b6-f complex, which mediates electron transfer between photosystem II (PSII) and photosystem I (PSI), cyclic electron flow around PSI, and state transitions. This is Cytochrome b6-f complex subunit 8 from Synechococcus sp. (strain CC9605).